A 154-amino-acid chain; its full sequence is Crossover junction endodeoxyribonuclease RuvC (154 aa).

Active-site residues include Asp-7, Glu-67, and Asp-139. The Mg(2+) site is built by Asp-7, Glu-67, and Asp-139.

It belongs to the RuvC family. Homodimer which binds Holliday junction (HJ) DNA. The HJ becomes 2-fold symmetrical on binding to RuvC with unstacked arms; it has a different conformation from HJ DNA in complex with RuvA. In the full resolvosome a probable DNA-RuvA(4)-RuvB(12)-RuvC(2) complex forms which resolves the HJ. Mg(2+) serves as cofactor.

The protein resides in the cytoplasm. The enzyme catalyses Endonucleolytic cleavage at a junction such as a reciprocal single-stranded crossover between two homologous DNA duplexes (Holliday junction).. In terms of biological role, the RuvA-RuvB-RuvC complex processes Holliday junction (HJ) DNA during genetic recombination and DNA repair. Endonuclease that resolves HJ intermediates. Cleaves cruciform DNA by making single-stranded nicks across the HJ at symmetrical positions within the homologous arms, yielding a 5'-phosphate and a 3'-hydroxyl group; requires a central core of homology in the junction. The consensus cleavage sequence is 5'-(A/T)TT(C/G)-3'. Cleavage occurs on the 3'-side of the TT dinucleotide at the point of strand exchange. HJ branch migration catalyzed by RuvA-RuvB allows RuvC to scan DNA until it finds its consensus sequence, where it cleaves and resolves the cruciform DNA. The polypeptide is Crossover junction endodeoxyribonuclease RuvC (Prochlorococcus marinus (strain NATL1A)).